A 369-amino-acid polypeptide reads, in one-letter code: MQFEIITTTAQLHDFIATLDGSPISLDTEFVRTRTYAANLGLLQISQNTQITLIDPIAVGDLSSFWQAIDNKNIILHASSEDLEIIRDHKGDLNFTLFDTQIACSFLNMGASLGYAKMVETLEAVIVDKGESRTDWCARPLSEKQINYAGVDVLYLQPCLEKLQQQLENKKMFPFFEQECQSVLAQKMVKQDPDKAYKLLNNLFKLDRQGLAIIKALAKWRLLTAQERNLALNFVVKADHLWLLAYYQPTSLDDLRRLNLLPNEIRIHGQQILTIMTQVISQDESTYPPLVNRLVDFPAYKSTVKSMRDKIQLCAEKYDLPLELLASKRVINEYLSWLWKLTNLQRQTANKPKLLTGWRFELIGHQFEH.

The 165-residue stretch at 4–168 folds into the 3'-5' exonuclease domain; the sequence is EIITTTAQLH…CLEKLQQQLE (165 aa). One can recognise an HRDC domain in the interval 207–286; sequence DRQGLAIIKA…TQVISQDEST (80 aa).

Belongs to the RNase D family. A divalent metal cation serves as cofactor.

It is found in the cytoplasm. The enzyme catalyses Exonucleolytic cleavage that removes extra residues from the 3'-terminus of tRNA to produce 5'-mononucleotides.. Functionally, exonuclease involved in the 3' processing of various precursor tRNAs. Initiates hydrolysis at the 3'-terminus of an RNA molecule and releases 5'-mononucleotides. This Psychromonas ingrahamii (strain DSM 17664 / CCUG 51855 / 37) protein is Ribonuclease D.